Reading from the N-terminus, the 77-residue chain is Inhibitor of histone-like protein HU (77 aa).

Interacts with host homodimeric histone-like protein (HU) hupA; thereby replacing dsDNA from the HU-DNA complex.

Acts as a host growth inhibitor by inhibiting DNA-binding of microbial histone-like protein HU, thereby preventing chromosome segregation and causing filamentous cell morphology and growth defects in the host. The sequence is that of Inhibitor of histone-like protein HU from Bacillus phage SP01 (Bacteriophage SP01).